Here is a 520-residue protein sequence, read N- to C-terminus: Peptide chain release factor 3 (520 aa).

The tr-type G domain maps to 8–277; it reads ESRKTFAIIS…HAPMPNARQT (270 aa). GTP-binding positions include 17–24, 85–89, and 139–142; these read SHPDAGKT, DTPGH, and NKLD.

Belongs to the TRAFAC class translation factor GTPase superfamily. Classic translation factor GTPase family. PrfC subfamily.

The protein localises to the cytoplasm. In terms of biological role, increases the formation of ribosomal termination complexes and stimulates activities of RF-1 and RF-2. It binds guanine nucleotides and has strong preference for UGA stop codons. It may interact directly with the ribosome. The stimulation of RF-1 and RF-2 is significantly reduced by GTP and GDP, but not by GMP. The polypeptide is Peptide chain release factor 3 (Staphylococcus haemolyticus (strain JCSC1435)).